A 201-amino-acid polypeptide reads, in one-letter code: 3-isopropylmalate dehydratase small subunit (201 aa).

The protein belongs to the LeuD family. LeuD type 1 subfamily. In terms of assembly, heterodimer of LeuC and LeuD.

It carries out the reaction (2R,3S)-3-isopropylmalate = (2S)-2-isopropylmalate. It functions in the pathway amino-acid biosynthesis; L-leucine biosynthesis; L-leucine from 3-methyl-2-oxobutanoate: step 2/4. Functionally, catalyzes the isomerization between 2-isopropylmalate and 3-isopropylmalate, via the formation of 2-isopropylmaleate. The chain is 3-isopropylmalate dehydratase small subunit from Sinorhizobium fredii (strain NBRC 101917 / NGR234).